The chain runs to 161 residues: Eukaryotic translation initiation factor 5A-1 (161 aa).

Basic and acidic residues predominate over residues 1–12 (MSDEEHQFESKA). Residues 1–21 (MSDEEHQFESKADAGASKTYP) are disordered. Residue lysine 52 is modified to Hypusine.

It belongs to the eIF-5A family. Post-translationally, lys-52 undergoes hypusination, a unique post-translational modification that consists in the addition of a butylamino group from spermidine to lysine side chain, leading to the formation of the unusual amino acid hypusine. eIF-5As are the only known proteins to undergo this modification, which is essential for their function.

Functionally, translation factor that promotes translation elongation and termination, particularly upon ribosome stalling at specific amino acid sequence contexts. Binds between the exit (E) and peptidyl (P) site of the ribosome and promotes rescue of stalled ribosome: specifically required for efficient translation of polyproline-containing peptides as well as other motifs that stall the ribosome. Acts as a ribosome quality control (RQC) cofactor by joining the RQC complex to facilitate peptidyl transfer during CAT tailing step. This chain is Eukaryotic translation initiation factor 5A-1, found in Medicago sativa (Alfalfa).